Consider the following 349-residue polypeptide: Protein RecA (349 aa).

An ATP-binding site is contributed by Gly-65–Thr-72. Residues Lys-329–Ser-349 form a disordered region. The segment covering Glu-339–Ser-349 has biased composition (acidic residues).

Belongs to the RecA family.

The protein localises to the cytoplasm. Can catalyze the hydrolysis of ATP in the presence of single-stranded DNA, the ATP-dependent uptake of single-stranded DNA by duplex DNA, and the ATP-dependent hybridization of homologous single-stranded DNAs. It interacts with LexA causing its activation and leading to its autocatalytic cleavage. The sequence is that of Protein RecA from Acinetobacter baylyi (strain ATCC 33305 / BD413 / ADP1).